A 261-amino-acid polypeptide reads, in one-letter code: Arcelin-5B (261 aa).

The signal sequence occupies residues 1 to 21 (MASSKLLSLALFLVLLTHANS). N-linked (GlcNAc...) asparagine glycosylation is found at N91 and N100. C167 and C203 are oxidised to a cystine.

The protein belongs to the leguminous lectin family. In terms of assembly, monomer.

Functionally, seed storage. This carbohydrate-binding lectin has toxic effects on bean bruchid pests. The polypeptide is Arcelin-5B (ARC5B) (Phaseolus vulgaris (Kidney bean)).